The following is a 427-amino-acid chain: UPF0229 protein YeaH (427 aa).

The segment at 84-110 is disordered; the sequence is QSDRIERPQGGGGGSGSGQGQASQDGE. A compositionally biased stretch (gly residues) spans 92 to 102; that stretch reads QGGGGGSGSGQ.

It belongs to the UPF0229 family.

The protein is UPF0229 protein YeaH of Escherichia fergusonii (strain ATCC 35469 / DSM 13698 / CCUG 18766 / IAM 14443 / JCM 21226 / LMG 7866 / NBRC 102419 / NCTC 12128 / CDC 0568-73).